Here is a 158-residue protein sequence, read N- to C-terminus: MFRIGQGYDAHRFKEGDHIVLCGVKIPFGRGFAAHSDGDVALHALCDALLGAAALGDIGRHFPDTDARYKGIDSRVLLREVRQRIASLGYTVGNVDVTVVAQAPRLAAHIQAMRENLAQDLEIPPDCVNVKATTTEGMGFEGRGEGISAHAVALLARR.

A divalent metal cation contacts are provided by D9 and H11. 4-CDP-2-C-methyl-D-erythritol 2-phosphate-binding positions include 9 to 11 (DAH) and 35 to 36 (HS). H43 lines the a divalent metal cation pocket. Residues 57–59 (DIG), 62–66 (FPDTD), 133–136 (TTTE), F140, and R143 contribute to the 4-CDP-2-C-methyl-D-erythritol 2-phosphate site.

The protein belongs to the IspF family. In terms of assembly, homotrimer. Requires a divalent metal cation as cofactor.

It carries out the reaction 4-CDP-2-C-methyl-D-erythritol 2-phosphate = 2-C-methyl-D-erythritol 2,4-cyclic diphosphate + CMP. It participates in isoprenoid biosynthesis; isopentenyl diphosphate biosynthesis via DXP pathway; isopentenyl diphosphate from 1-deoxy-D-xylulose 5-phosphate: step 4/6. Its function is as follows. Involved in the biosynthesis of isopentenyl diphosphate (IPP) and dimethylallyl diphosphate (DMAPP), two major building blocks of isoprenoid compounds. Catalyzes the conversion of 4-diphosphocytidyl-2-C-methyl-D-erythritol 2-phosphate (CDP-ME2P) to 2-C-methyl-D-erythritol 2,4-cyclodiphosphate (ME-CPP) with a corresponding release of cytidine 5-monophosphate (CMP). The polypeptide is 2-C-methyl-D-erythritol 2,4-cyclodiphosphate synthase (Methylococcus capsulatus (strain ATCC 33009 / NCIMB 11132 / Bath)).